A 360-amino-acid chain; its full sequence is Photosystem II protein D1 1 (360 aa).

Helical transmembrane passes span 29 to 46, 118 to 133, and 142 to 156; these read YVGW…AATV, HFLI…QWEL, and WICV…SATA. Residue His-118 coordinates chlorophyll a. Position 126 (Tyr-126) interacts with pheophytin a. [CaMn4O5] cluster is bound by residues Asp-170 and Glu-189. The helical transmembrane segment at 197–218 threads the bilayer; sequence FHMLGVAGVFGGSLFSAMHGSL. His-198 contributes to the chlorophyll a binding site. Residues His-215 and 264–265 each bind a quinone; that span reads SF. His-215 serves as a coordination point for Fe cation. Position 272 (His-272) interacts with Fe cation. A helical membrane pass occupies residues 274 to 288; the sequence is FLAAWPVIGIWFTAL. The [CaMn4O5] cluster site is built by His-332, Glu-333, Asp-342, and Ala-344. A propeptide spanning residues 345 to 360 is cleaved from the precursor; sequence AGEVAPVALTAPAING.

This sequence belongs to the reaction center PufL/M/PsbA/D family. As to quaternary structure, PSII is composed of 1 copy each of membrane proteins PsbA, PsbB, PsbC, PsbD, PsbE, PsbF, PsbH, PsbI, PsbJ, PsbK, PsbL, PsbM, PsbT, PsbX, PsbY, PsbZ, Psb30/Ycf12, peripheral proteins PsbO, CyanoQ (PsbQ), PsbU, PsbV and a large number of cofactors. It forms dimeric complexes. The D1/D2 heterodimer binds P680, chlorophylls that are the primary electron donor of PSII, and subsequent electron acceptors. It shares a non-heme iron and each subunit binds pheophytin, quinone, additional chlorophylls, carotenoids and lipids. D1 provides most of the ligands for the Mn4-Ca-O5 cluster of the oxygen-evolving complex (OEC). There is also a Cl(-1) ion associated with D1 and D2, which is required for oxygen evolution. The PSII complex binds additional chlorophylls, carotenoids and specific lipids. serves as cofactor. In terms of processing, tyr-161 forms a radical intermediate that is referred to as redox-active TyrZ, YZ or Y-Z. C-terminally processed by CtpA; processing is essential to allow assembly of the oxygen-evolving complex and thus photosynthetic growth.

It localises to the cellular thylakoid membrane. The catalysed reaction is 2 a plastoquinone + 4 hnu + 2 H2O = 2 a plastoquinol + O2. Functionally, photosystem II (PSII) is a light-driven water:plastoquinone oxidoreductase that uses light energy to abstract electrons from H(2)O, generating O(2) and a proton gradient subsequently used for ATP formation. It consists of a core antenna complex that captures photons, and an electron transfer chain that converts photonic excitation into a charge separation. The D1/D2 (PsbA/PsbD) reaction center heterodimer binds P680, the primary electron donor of PSII as well as several subsequent electron acceptors. This is Photosystem II protein D1 1 from Nostoc sp. (strain PCC 7120 / SAG 25.82 / UTEX 2576).